The following is a 196-amino-acid chain: UPF0314 protein Oant_0840 (196 aa).

4 consecutive transmembrane segments (helical) span residues 15–35 (WGLG…WLYF), 65–85 (WYTL…TVIA), 127–147 (FGDS…GFLI), and 151–171 (LPTK…LIVI).

Belongs to the UPF0314 family.

Its subcellular location is the cell membrane. The polypeptide is UPF0314 protein Oant_0840 (Brucella anthropi (strain ATCC 49188 / DSM 6882 / CCUG 24695 / JCM 21032 / LMG 3331 / NBRC 15819 / NCTC 12168 / Alc 37) (Ochrobactrum anthropi)).